The following is a 223-amino-acid chain: MMHEKLKKAVGWAALEYVSSGMIIGVGTGSTTDHFIDALGTVKHKIEGVVSSSEQSTTKLKSMGILLFNLNDVDGLDIYVDGTDEINSNMQMIKGGGAALTREKVLAAAANKFICIADTSKQVDILGNFPLPIEVIPMAHAWVARELVHLTGGLPKYRQGVITDNGNIILDIYNLKILDAIALEKIINNIPGVVTVGLFANRCADIALISSDLGIEEISRSIK.

Substrate is bound by residues 28–31 (TGST), 81–84 (DGTD), and 94–97 (KGGG). Glu103 acts as the Proton acceptor in catalysis. Lys121 contributes to the substrate binding site.

This sequence belongs to the ribose 5-phosphate isomerase family. Homodimer.

It carries out the reaction aldehydo-D-ribose 5-phosphate = D-ribulose 5-phosphate. The protein operates within carbohydrate degradation; pentose phosphate pathway; D-ribose 5-phosphate from D-ribulose 5-phosphate (non-oxidative stage): step 1/1. In terms of biological role, catalyzes the reversible conversion of ribose-5-phosphate to ribulose 5-phosphate. This chain is Ribose-5-phosphate isomerase A, found in Baumannia cicadellinicola subsp. Homalodisca coagulata.